We begin with the raw amino-acid sequence, 184 residues long: Photosystem I assembly protein Ycf4 (184 aa).

A run of 2 helical transmembrane segments spans residues 19 to 39 and 57 to 77; these read ISNFCWAFILFLGSLGFLLVG and IIFFPQGLVMSFYGIAGLFIS.

Belongs to the Ycf4 family.

It is found in the plastid. Its subcellular location is the chloroplast thylakoid membrane. In terms of biological role, seems to be required for the assembly of the photosystem I complex. This chain is Photosystem I assembly protein Ycf4, found in Nicotiana sylvestris (Wood tobacco).